Here is a 130-residue protein sequence, read N- to C-terminus: MAQVQYYGTGRRKSSVARVRLVPGDGRIVINDRDIRDYIPSEALIEVVKQPLVLTETLGNYDVLVNVKGGGFSGQAGAIRHGIARALLQVDPDYRPVLKRAGLLTRDARVKERKKYGLKGARRAPQFSKR.

Belongs to the universal ribosomal protein uS9 family.

This Geobacillus sp. (strain WCH70) protein is Small ribosomal subunit protein uS9.